We begin with the raw amino-acid sequence, 314 residues long: UPF0761 membrane protein VP0125 (314 aa).

Helical transmembrane passes span 41 to 61 (YLAY…LSIL), 104 to 124 (MSAV…SNID), 139 to 159 (LVFS…LVGA), 185 to 205 (FLRW…YILV), 217 to 237 (VGAA…ALYI), and 249 to 269 (ALAA…IVLL). The interval 295 to 314 (ESQLANEGSESSDSANSTSQ) is disordered.

Belongs to the UPF0761 family.

It is found in the cell inner membrane. The chain is UPF0761 membrane protein VP0125 from Vibrio parahaemolyticus serotype O3:K6 (strain RIMD 2210633).